We begin with the raw amino-acid sequence, 262 residues long: Phosphonates import ATP-binding protein PhnC (262 aa).

Positions 5 to 253 (IRVEKLAKTF…RFDHLYRSIN (249 aa)) constitute an ABC transporter domain. Residue 37 to 44 (GPSGSGKS) participates in ATP binding.

It belongs to the ABC transporter superfamily. Phosphonates importer (TC 3.A.1.9.1) family. As to quaternary structure, the complex is composed of two ATP-binding proteins (PhnC), two transmembrane proteins (PhnE) and a solute-binding protein (PhnD).

Its subcellular location is the cell inner membrane. The catalysed reaction is phosphonate(out) + ATP + H2O = phosphonate(in) + ADP + phosphate + H(+). Its function is as follows. Part of the ABC transporter complex PhnCDE involved in phosphonates import. Responsible for energy coupling to the transport system. In Escherichia coli O6:H1 (strain CFT073 / ATCC 700928 / UPEC), this protein is Phosphonates import ATP-binding protein PhnC.